Consider the following 165-residue polypeptide: Putative protein FAM86C1P (165 aa).

The protein belongs to the class I-like SAM-binding methyltransferase superfamily. EEF2KMT family. Interacts with EEF2KMT.

The protein is Putative protein FAM86C1P of Homo sapiens (Human).